An 832-amino-acid chain; its full sequence is Subtilisin-like protease SBT2.4 (832 aa).

Positions methionine 1–alanine 27 are cleaved as a signal peptide. In terms of domain architecture, Inhibitor I9 spans glutamate 74–methionine 138. The region spanning glutamine 150–leucine 690 is the Peptidase S8 domain. Aspartate 174 (charge relay system) is an active-site residue. Residues asparagine 196 and asparagine 238 are each glycosylated (N-linked (GlcNAc...) asparagine). Histidine 252 functions as the Charge relay system in the catalytic mechanism. Positions threonine 425–tyrosine 524 constitute a PA domain. The N-linked (GlcNAc...) asparagine glycan is linked to asparagine 426. Serine 618 functions as the Charge relay system in the catalytic mechanism. N-linked (GlcNAc...) asparagine glycosylation is found at asparagine 761, asparagine 774, and asparagine 800.

It belongs to the peptidase S8 family.

It is found in the secreted. Serine protease required for epidermal surface formation in embryos and juvenile plants. Involved in embryonic cuticle formation downstream of BHLH95/ZOU. This chain is Subtilisin-like protease SBT2.4, found in Arabidopsis thaliana (Mouse-ear cress).